Consider the following 141-residue polypeptide: Large ribosomal subunit protein uL11 (141 aa).

This sequence belongs to the universal ribosomal protein uL11 family. In terms of assembly, part of the ribosomal stalk of the 50S ribosomal subunit. Interacts with L10 and the large rRNA to form the base of the stalk. L10 forms an elongated spine to which L12 dimers bind in a sequential fashion forming a multimeric L10(L12)X complex. One or more lysine residues are methylated.

Its function is as follows. Forms part of the ribosomal stalk which helps the ribosome interact with GTP-bound translation factors. This is Large ribosomal subunit protein uL11 from Streptococcus pyogenes serotype M1.